We begin with the raw amino-acid sequence, 68 residues long: Large ribosomal subunit protein bL35 (68 aa).

2 stretches are compositionally biased toward basic residues: residues 1–15 and 23–38; these read MPKM…KRFK and TARK…HKSS. The disordered stretch occupies residues 1–38; it reads MPKMKSHSGTKKRFKVTGSGKVTARKAGKRHLNEHKSS.

This sequence belongs to the bacterial ribosomal protein bL35 family.

The sequence is that of Large ribosomal subunit protein bL35 from Cutibacterium acnes (strain DSM 16379 / KPA171202) (Propionibacterium acnes).